The chain runs to 143 residues: Transcriptional regulator MraZ (143 aa).

2 SpoVT-AbrB domains span residues 5–47 (TYTP…PKEE) and 76–119 (ADEQ…DAQA).

Belongs to the MraZ family. Forms oligomers.

The protein resides in the cytoplasm. It localises to the nucleoid. The chain is Transcriptional regulator MraZ from Corynebacterium efficiens (strain DSM 44549 / YS-314 / AJ 12310 / JCM 11189 / NBRC 100395).